The chain runs to 88 residues: Small ribosomal subunit protein bS20 (88 aa).

Disordered stretches follow at residues 1–22 and 69–88; these read MPNIKSAIKRVKTNEKRRAQNA and KNAASRQKSRLAKKLNGLSA.

The protein belongs to the bacterial ribosomal protein bS20 family.

In terms of biological role, binds directly to 16S ribosomal RNA. The protein is Small ribosomal subunit protein bS20 of Shouchella clausii (strain KSM-K16) (Alkalihalobacillus clausii).